The following is a 538-amino-acid chain: Tryptophan 7-halogenase PrnA (538 aa).

8 residues coordinate FAD: Gly-13, Thr-15, Ala-16, Ser-39, Ile-42, Ile-45, Glu-49, and Ala-50. The active site involves Lys-79. Lys-79 serves as a coordination point for 7-chloro-L-tryptophan. Positions 187 and 337 each coordinate FAD. Glu-346 lines the 7-chloro-L-tryptophan pocket. Glu-346 lines the L-tryptophan pocket. Positions 348 and 349 each coordinate chloride. Residue Ile-350 coordinates FAD. 7-chloro-L-tryptophan-binding residues include Tyr-443, Tyr-444, Glu-450, and Phe-454. Positions 443, 444, 450, and 454 each coordinate L-tryptophan.

This sequence belongs to the flavin-dependent halogenase family. Bacterial tryptophan halogenase subfamily. As to quaternary structure, homodimer.

The enzyme catalyses L-tryptophan + FADH2 + chloride + O2 = 7-chloro-L-tryptophan + FAD + 2 H2O. It functions in the pathway antibiotic biosynthesis. Its function is as follows. Involved in the biosynthesis of the antifungal antibiotic pyrrolnitrin. Catalyzes the chlorination of tryptophan (Trp) at C7 position to yield 7-chloro-L-tryptophan (7-CLT). The polypeptide is Tryptophan 7-halogenase PrnA (Pseudomonas fluorescens).